Here is a 1012-residue protein sequence, read N- to C-terminus: Axonemal dynein light chain domain-containing protein 1 (1012 aa).

Residues 1–17 are compositionally biased toward low complexity; sequence MSLPKTPSTPLNSTSTS. The interval 1–34 is disordered; it reads MSLPKTPSTPLNSTSTSESKKLKVSVAKEGTRGL. Coiled-coil stretches lie at residues 317 to 402, 447 to 486, and 572 to 597; these read QRIL…IWSS, EDLA…IVKD, and SERQ…RING. Residues 841–854 are compositionally biased toward acidic residues; the sequence is PEIDESFKEDEEES. Disordered regions lie at residues 841–879 and 963–1012; these read PEID…TEKE and LEEL…KKGH. 2 stretches are compositionally biased toward basic and acidic residues: residues 855-879 and 963-987; these read KEDR…TEKE and LEEL…REVK. The span at 988 to 997 shows a compositional bias: acidic residues; the sequence is EEEEQQEEEE.

As to expression, highly expressed in testis. Highly expressed in the round and late spermatids.

Its subcellular location is the cytoplasm. Functionally, may be essential for spermiogenesis and male fertility probably by regulating the manchette dynamics, spermatid head shaping and sperm flagellum assembly. In Homo sapiens (Human), this protein is Axonemal dynein light chain domain-containing protein 1.